The sequence spans 218 residues: Deoxyribose-phosphate aldolase (218 aa).

Asp-89 functions as the Proton donor/acceptor in the catalytic mechanism. Lys-152 (schiff-base intermediate with acetaldehyde) is an active-site residue. The active-site Proton donor/acceptor is Lys-182.

Belongs to the DeoC/FbaB aldolase family. DeoC type 1 subfamily.

The protein resides in the cytoplasm. The catalysed reaction is 2-deoxy-D-ribose 5-phosphate = D-glyceraldehyde 3-phosphate + acetaldehyde. Its pathway is carbohydrate degradation; 2-deoxy-D-ribose 1-phosphate degradation; D-glyceraldehyde 3-phosphate and acetaldehyde from 2-deoxy-alpha-D-ribose 1-phosphate: step 2/2. Its function is as follows. Catalyzes a reversible aldol reaction between acetaldehyde and D-glyceraldehyde 3-phosphate to generate 2-deoxy-D-ribose 5-phosphate. The protein is Deoxyribose-phosphate aldolase of Kocuria rhizophila (strain ATCC 9341 / DSM 348 / NBRC 103217 / DC2201).